The following is a 501-amino-acid chain: Probable malate:quinone oxidoreductase (501 aa).

The protein belongs to the MQO family. FAD serves as cofactor.

It carries out the reaction (S)-malate + a quinone = a quinol + oxaloacetate. Its pathway is carbohydrate metabolism; tricarboxylic acid cycle; oxaloacetate from (S)-malate (quinone route): step 1/1. This is Probable malate:quinone oxidoreductase from Paenarthrobacter aurescens (strain TC1).